Consider the following 158-residue polypeptide: Endoribonuclease YbeY (158 aa).

The Zn(2+) site is built by His-118, His-122, and His-128.

The protein belongs to the endoribonuclease YbeY family. The cofactor is Zn(2+).

The protein localises to the cytoplasm. Functionally, single strand-specific metallo-endoribonuclease involved in late-stage 70S ribosome quality control and in maturation of the 3' terminus of the 16S rRNA. In Alteromonas mediterranea (strain DSM 17117 / CIP 110805 / LMG 28347 / Deep ecotype), this protein is Endoribonuclease YbeY.